An 805-amino-acid chain; its full sequence is Translation initiation factor IF-2 (805 aa).

2 disordered regions span residues 68 to 89 (VVTE…EKKE) and 141 to 215 (KEKE…KEKK). Basic and acidic residues predominate over residues 79–89 (VEEKKEEEKKE). Residues 306–474 (PRPPIVVVMG…MILLLADILE (169 aa)) form the tr-type G domain. The segment at 315-322 (GHVDHGKT) is G1. A GTP-binding site is contributed by 315–322 (GHVDHGKT). The segment at 340–344 (GITQH) is G2. Residues 362–365 (DTPG) form a G3 region. Residues 362–366 (DTPGH) and 416–419 (NKID) contribute to the GTP site. The segment at 416-419 (NKID) is G4. The tract at residues 452-454 (SAK) is G5.

It belongs to the TRAFAC class translation factor GTPase superfamily. Classic translation factor GTPase family. IF-2 subfamily.

It is found in the cytoplasm. One of the essential components for the initiation of protein synthesis. Protects formylmethionyl-tRNA from spontaneous hydrolysis and promotes its binding to the 30S ribosomal subunits. Also involved in the hydrolysis of GTP during the formation of the 70S ribosomal complex. In Aquifex aeolicus (strain VF5), this protein is Translation initiation factor IF-2 (infB).